The sequence spans 407 residues: uncharacterized protein (407 aa).

An N-terminal signal peptide occupies residues 1 to 27 (MRILAMTRAHNAGRTLAATLDSLAVFS).

This is an uncharacterized protein from Mycobacterium bovis (strain ATCC BAA-935 / AF2122/97).